Consider the following 335-residue polypeptide: Glyceraldehyde-3-phosphate dehydrogenase (335 aa).

Residues 15–16 (RI) and D37 each bind NAD(+). Residues 155 to 157 (SCT), T186, R201, 214 to 215 (TG), and R237 contribute to the D-glyceraldehyde 3-phosphate site. Residue C156 is the Nucleophile of the active site. 2 residues coordinate NAD(+): Q301 and N318.

It belongs to the glyceraldehyde-3-phosphate dehydrogenase family. As to quaternary structure, homotetramer.

The protein localises to the cytoplasm. It carries out the reaction D-glyceraldehyde 3-phosphate + phosphate + NADP(+) = (2R)-3-phospho-glyceroyl phosphate + NADPH + H(+). It catalyses the reaction D-glyceraldehyde 3-phosphate + phosphate + NAD(+) = (2R)-3-phospho-glyceroyl phosphate + NADH + H(+). It participates in carbohydrate degradation; glycolysis; pyruvate from D-glyceraldehyde 3-phosphate: step 1/5. The sequence is that of Glyceraldehyde-3-phosphate dehydrogenase (gap) from Haloarcula vallismortis (Halobacterium vallismortis).